Reading from the N-terminus, the 200-residue chain is MALAYDGAIQRLIDAFGRLPGIGPKGAQRIAFYMLSAPEDEARDLAEAIEEVKAKIRFCDICGNVCESSPCPVCADPRRDRSVICVVEEPKDVMSIERTREYHGLYHVLGGAINPMANVGPADLRIPGLLKRLEGDEVKEVIMALDPNIEGEATTSYLTQLLRPVGVKVTRLASGLPVGSDLEYADEITLGRALAGRREA.

Residues 59–74 (CDICGNVCESSPCPVC) form a C4-type zinc finger. The 96-residue stretch at 82–177 (SVICVVEEPK…KVTRLASGLP (96 aa)) folds into the Toprim domain.

The protein belongs to the RecR family.

May play a role in DNA repair. It seems to be involved in an RecBC-independent recombinational process of DNA repair. It may act with RecF and RecO. The sequence is that of Recombination protein RecR from Bifidobacterium longum (strain DJO10A).